A 227-amino-acid chain; its full sequence is Venom allergen 5 (227 aa).

The N-terminal stretch at Met-1 to Ala-21 is a signal peptide. 4 disulfide bridges follow: Cys-25–Cys-37, Cys-29–Cys-125, Cys-49–Cys-117, and Cys-193–Cys-210. Residues Glu-69–Tyr-212 form the SCP domain.

Belongs to the CRISP family. Venom allergen 5-like subfamily. As to expression, expressed by the venom gland.

The protein localises to the secreted. In Polistes dominula (European paper wasp), this protein is Venom allergen 5.